A 326-amino-acid chain; its full sequence is Lipoyl synthase (326 aa).

The [4Fe-4S] cluster site is built by Cys74, Cys79, Cys85, Cys100, Cys104, Cys107, and Ser314. The 219-residue stretch at 85 to 303 folds into the Radical SAM core domain; it reads CFGRGTATFM…EEEAYKMGFS (219 aa).

The protein belongs to the radical SAM superfamily. Lipoyl synthase family. [4Fe-4S] cluster is required as a cofactor.

It localises to the cytoplasm. The enzyme catalyses [[Fe-S] cluster scaffold protein carrying a second [4Fe-4S](2+) cluster] + N(6)-octanoyl-L-lysyl-[protein] + 2 oxidized [2Fe-2S]-[ferredoxin] + 2 S-adenosyl-L-methionine + 4 H(+) = [[Fe-S] cluster scaffold protein] + N(6)-[(R)-dihydrolipoyl]-L-lysyl-[protein] + 4 Fe(3+) + 2 hydrogen sulfide + 2 5'-deoxyadenosine + 2 L-methionine + 2 reduced [2Fe-2S]-[ferredoxin]. It functions in the pathway protein modification; protein lipoylation via endogenous pathway; protein N(6)-(lipoyl)lysine from octanoyl-[acyl-carrier-protein]: step 2/2. In terms of biological role, catalyzes the radical-mediated insertion of two sulfur atoms into the C-6 and C-8 positions of the octanoyl moiety bound to the lipoyl domains of lipoate-dependent enzymes, thereby converting the octanoylated domains into lipoylated derivatives. This Acidovorax ebreus (strain TPSY) (Diaphorobacter sp. (strain TPSY)) protein is Lipoyl synthase.